The following is an 842-amino-acid chain: Squamosa promoter-binding-like protein 9 (842 aa).

Positions 1-18 (MDAPGGGGGGGGGGGGVD) are enriched in gly residues. Disordered stretches follow at residues 1 to 22 (MDAP…AGEP), 59 to 97 (ALLP…RVRK), and 140 to 168 (RKKP…TPAE). Over residues 69–85 (PAEAEAEAAGPASLPSS) the composition is skewed to low complexity. Positions 146 to 162 (AGRGSGAAVGGSGGGAS) are enriched in gly residues. The SBP-type; atypical zinc-finger motif lies at 168-245 (EMKCQVPGCE…ERHNKRRRRK (78 aa)). Zn(2+) is bound by residues Cys-171, Cys-176, Cys-193, Cys-196, Cys-212, Cys-215, His-219, and Cys-231. Residues 228 to 244 (KRSCRRKLERHNKRRRR) carry the Bipartite nuclear localization signal motif. Basic residues predominate over residues 236–246 (ERHNKRRRRKP). The disordered stretch occupies residues 236 to 256 (ERHNKRRRRKPDSKGILEKDI).

As to expression, ubiquitous.

The protein localises to the nucleus. In terms of biological role, trans-acting factor that binds specifically to the consensus nucleotide sequence 5'-TNCGTACAA-3'. The protein is Squamosa promoter-binding-like protein 9 (SPL9) of Oryza sativa subsp. japonica (Rice).